A 292-amino-acid chain; its full sequence is Acetyl-coenzyme A carboxylase carboxyl transferase subunit beta (292 aa).

The CoA carboxyltransferase N-terminal domain occupies 35–292 (VFSQCEQCNS…LKLHAKKVTS (258 aa)). Positions 39, 42, 58, and 61 each coordinate Zn(2+). The segment at 39–61 (CEQCNSAIYNKDLEHNYEVCPYC) adopts a C4-type zinc-finger fold.

The protein belongs to the AccD/PCCB family. Acetyl-CoA carboxylase is a heterohexamer composed of biotin carboxyl carrier protein (AccB), biotin carboxylase (AccC) and two subunits each of ACCase subunit alpha (AccA) and ACCase subunit beta (AccD). Requires Zn(2+) as cofactor.

It localises to the cytoplasm. It catalyses the reaction N(6)-carboxybiotinyl-L-lysyl-[protein] + acetyl-CoA = N(6)-biotinyl-L-lysyl-[protein] + malonyl-CoA. It participates in lipid metabolism; malonyl-CoA biosynthesis; malonyl-CoA from acetyl-CoA: step 1/1. In terms of biological role, component of the acetyl coenzyme A carboxylase (ACC) complex. Biotin carboxylase (BC) catalyzes the carboxylation of biotin on its carrier protein (BCCP) and then the CO(2) group is transferred by the transcarboxylase to acetyl-CoA to form malonyl-CoA. In Acholeplasma laidlawii (strain PG-8A), this protein is Acetyl-coenzyme A carboxylase carboxyl transferase subunit beta.